The following is a 382-amino-acid chain: Glutaminyl-peptide cyclotransferase-like protein (382 aa).

The chain crosses the membrane as a helical span at residues 35–55; sequence LLPLLLALAVGSAFYTIWSGW. Cys-167 and Cys-191 are oxidised to a cystine. A Zn(2+)-binding site is contributed by Asp-186. The Proton acceptor role is filled by Glu-225. Position 226 (Glu-226) interacts with Zn(2+). Asp-269 (proton acceptor) is an active-site residue. Position 351 (His-351) interacts with Zn(2+).

This sequence belongs to the glutaminyl-peptide cyclotransferase family.

The protein resides in the golgi apparatus membrane. It catalyses the reaction N-terminal L-glutaminyl-[peptide] = N-terminal 5-oxo-L-prolyl-[peptide] + NH4(+). Functionally, responsible for the biosynthesis of pyroglutamyl peptides. This is Glutaminyl-peptide cyclotransferase-like protein (QPCTL) from Homo sapiens (Human).